Here is a 98-residue protein sequence, read N- to C-terminus: Co-chaperonin GroES (98 aa).

Residues 35–57 (EKPQEGKVISAGPGRVDDKGTRV) form a disordered region.

The protein belongs to the GroES chaperonin family. Heptamer of 7 subunits arranged in a ring. Interacts with the chaperonin GroEL.

The protein resides in the cytoplasm. Together with the chaperonin GroEL, plays an essential role in assisting protein folding. The GroEL-GroES system forms a nano-cage that allows encapsulation of the non-native substrate proteins and provides a physical environment optimized to promote and accelerate protein folding. GroES binds to the apical surface of the GroEL ring, thereby capping the opening of the GroEL channel. The protein is Co-chaperonin GroES of Cutibacterium acnes (strain DSM 16379 / KPA171202) (Propionibacterium acnes).